The chain runs to 151 residues: US8.5 protein (151 aa).

The disordered stretch occupies residues 27-107; that stretch reads SSQPLDPEGP…APSPHPRPPG (81 aa). Residues 80 to 91 are compositionally biased toward basic and acidic residues; it reads SDERGPPRHDRP.

It is found in the host nucleus. The protein localises to the host nucleolus. This is US8.5 protein (US8.5) from Human herpesvirus 1 (strain F) (HHV-1).